The following is a 138-amino-acid chain: Large ribosomal subunit protein uL16 (138 aa).

Basic residues predominate over residues 1–17 (MLIPRKVKHRKQHHPKQ). The segment at 1 to 24 (MLIPRKVKHRKQHHPKQRGIASGG) is disordered.

Belongs to the universal ribosomal protein uL16 family. Part of the 50S ribosomal subunit.

Functionally, binds 23S rRNA and is also seen to make contacts with the A and possibly P site tRNAs. The chain is Large ribosomal subunit protein uL16 from Mycolicibacterium vanbaalenii (strain DSM 7251 / JCM 13017 / BCRC 16820 / KCTC 9966 / NRRL B-24157 / PYR-1) (Mycobacterium vanbaalenii).